A 361-amino-acid chain; its full sequence is Chorismate synthase (361 aa).

2 residues coordinate NADP(+): R48 and R54. Residues 125-127 (RSS), 238-239 (NA), G278, 293-297 (KPTSS), and R319 contribute to the FMN site.

This sequence belongs to the chorismate synthase family. Homotetramer. FMNH2 serves as cofactor.

It carries out the reaction 5-O-(1-carboxyvinyl)-3-phosphoshikimate = chorismate + phosphate. The protein operates within metabolic intermediate biosynthesis; chorismate biosynthesis; chorismate from D-erythrose 4-phosphate and phosphoenolpyruvate: step 7/7. Its function is as follows. Catalyzes the anti-1,4-elimination of the C-3 phosphate and the C-6 proR hydrogen from 5-enolpyruvylshikimate-3-phosphate (EPSP) to yield chorismate, which is the branch point compound that serves as the starting substrate for the three terminal pathways of aromatic amino acid biosynthesis. This reaction introduces a second double bond into the aromatic ring system. The polypeptide is Chorismate synthase (Shigella flexneri serotype 5b (strain 8401)).